Reading from the N-terminus, the 363-residue chain is Chorismate synthase (363 aa).

Position 48 (Arg-48) interacts with NADP(+). FMN-binding positions include 125–127 (RSS), 238–239 (NA), Gly-278, 293–297 (KPTAS), and Arg-319.

Belongs to the chorismate synthase family. As to quaternary structure, homotetramer. Requires FMNH2 as cofactor.

The catalysed reaction is 5-O-(1-carboxyvinyl)-3-phosphoshikimate = chorismate + phosphate. It functions in the pathway metabolic intermediate biosynthesis; chorismate biosynthesis; chorismate from D-erythrose 4-phosphate and phosphoenolpyruvate: step 7/7. Catalyzes the anti-1,4-elimination of the C-3 phosphate and the C-6 proR hydrogen from 5-enolpyruvylshikimate-3-phosphate (EPSP) to yield chorismate, which is the branch point compound that serves as the starting substrate for the three terminal pathways of aromatic amino acid biosynthesis. This reaction introduces a second double bond into the aromatic ring system. The chain is Chorismate synthase from Acinetobacter baylyi (strain ATCC 33305 / BD413 / ADP1).